A 686-amino-acid polypeptide reads, in one-letter code: Probable metal-nicotianamine transporter YSL10 (686 aa).

Transmembrane regions (helical) follow at residues 36–56, 60–80, 109–129, 151–171, 212–232, 271–291, 316–336, 383–403, 415–435, 461–481, 501–521, 556–576, 597–617, and 639–659; these read VTLR…VIVM, LTTG…FFLL, CVVA…IFAM, LGWM…SVVP, MLGK…FYTG, LVNI…WPLI, VFIS…KVMT, IPNW…IATV, VAVS…GCGL, GGII…STAS, FVSQ…VFWL, GSLP…AIAV, MAIP…GSLI, and GLIC…LAGV.

The protein belongs to the YSL (TC 2.A.67.2) family.

The protein resides in the membrane. May be involved in the transport of nicotianamine-chelated metals. This is Probable metal-nicotianamine transporter YSL10 (YSL10) from Oryza sativa subsp. japonica (Rice).